A 124-amino-acid polypeptide reads, in one-letter code: Orexigenic neuropeptide QRFP (124 aa).

An N-terminal signal peptide occupies residues 1-17 (MRCLCSWLCLLLPLSAC). A propeptide spanning residues 18–79 (FPLLDRRGPT…REHTGFRLGR (62 aa)) is cleaved from the precursor. A disordered region spans residues 63–100 (KEQQASRREHTGFRLGRQDSGSEATGFLPTDSEKASGP). At glutamine 80 the chain carries Pyrrolidone carboxylic acid. Phenylalanine 122 is subject to Phenylalanine amide.

Belongs to the RFamide neuropeptide family. As to quaternary structure, ligand for the G-protein coupled receptor QRFPR/GPR103. As to expression, expressed in the brain with highest expression levels in the hypothalamus and optic nerve. Also expressed in the trachea and mammary gland.

The protein resides in the secreted. Its function is as follows. Stimulates feeding and grooming behavior, metabolic rate and locomotor activity and increases blood pressure. May have orexigenic activity. May promote aldosterone secretion by the adrenal gland. The polypeptide is Orexigenic neuropeptide QRFP (Qrfp) (Rattus norvegicus (Rat)).